Consider the following 774-residue polypeptide: Ent-beyerene synthase KSL4, chloroplastic (774 aa).

Residues 1–35 constitute a chloroplast transit peptide; the sequence is MLLGSTNTLRISSHGKEWEGKTLTGMPLGKVNQRV. Residues Asp-525, Asp-529, Asn-668, Asp-669, Thr-672, and Glu-676 each coordinate Mg(2+). The DDXXD motif signature appears at 525 to 529; the sequence is DDFFD.

The protein belongs to the terpene synthase family. It depends on Mg(2+) as a cofactor.

It is found in the plastid. Its subcellular location is the chloroplast. The enzyme catalyses ent-copalyl diphosphate = ent-beyerene + diphosphate. The catalysed reaction is ent-copalyl diphosphate = ent-atiserene + diphosphate. It carries out the reaction ent-copalyl diphosphate = ent-kaur-16-ene + diphosphate. Its pathway is secondary metabolite biosynthesis; terpenoid biosynthesis. In terms of biological role, diterpene cyclase involved in the biosynthesis of labdane-related diterpenoids (LRDs) natural products. Catalyzes the cyclization of ent-CDP into ent-beyerene as a major and ent-kaurene and ent-atiserene as minor products. This chain is Ent-beyerene synthase KSL4, chloroplastic, found in Ricinus communis (Castor bean).